A 406-amino-acid polypeptide reads, in one-letter code: Arginine deiminase (406 aa).

The active-site Amidino-cysteine intermediate is Cys-396.

The protein belongs to the arginine deiminase family.

It is found in the cytoplasm. It catalyses the reaction L-arginine + H2O = L-citrulline + NH4(+). It functions in the pathway amino-acid degradation; L-arginine degradation via ADI pathway; carbamoyl phosphate from L-arginine: step 1/2. In Aliivibrio fischeri (strain ATCC 700601 / ES114) (Vibrio fischeri), this protein is Arginine deiminase.